The chain runs to 457 residues: Glycerol-3-phosphate acyltransferase 3 (457 aa).

A helical transmembrane segment spans residues 14-34 (WLTLVGSLILLPSAFGLSLGI). Phosphoserine occurs at positions 68 and 77. 2 helical membrane-spanning segments follow: residues 137–157 (ISPK…CFLL) and 161–181 (VTLA…VGQL). The HXXXXD motif motif lies at 229–234 (HTSPID). The tract at residues 429-457 (GNGSPSLALDSSTVDNHGSPEPAFRSESL) is disordered. Residues 431-444 (GSPSLALDSSTVDN) are compositionally biased toward polar residues.

The protein belongs to the 1-acyl-sn-glycerol-3-phosphate acyltransferase family.

It localises to the endoplasmic reticulum membrane. It catalyses the reaction sn-glycerol 3-phosphate + an acyl-CoA = a 1-acyl-sn-glycero-3-phosphate + CoA. The enzyme catalyses a 1-acyl-sn-glycero-3-phosphate + an acyl-CoA = a 1,2-diacyl-sn-glycero-3-phosphate + CoA. It carries out the reaction dodecanoyl-CoA + sn-glycerol 3-phosphate = 1-dodecanoyl-sn-glycerol 3-phosphate + CoA. The catalysed reaction is sn-glycerol 3-phosphate + hexadecanoyl-CoA = 1-hexadecanoyl-sn-glycero-3-phosphate + CoA. It catalyses the reaction sn-glycerol 3-phosphate + (9Z)-octadecenoyl-CoA = 1-(9Z-octadecenoyl)-sn-glycero-3-phosphate + CoA. The enzyme catalyses (9Z,12Z)-octadecadienoyl-CoA + sn-glycerol 3-phosphate = 1-(9Z,12Z)-octadecadienoyl-sn-glycero-3-phosphate + CoA. It carries out the reaction 1-tetradecanoyl-sn-glycerol 3-phosphate + (9Z)-octadecenoyl-CoA = 1-tetradecanoyl-2-(9Z)-octadecenoyl-sn-glycero-3-phosphate + CoA. The catalysed reaction is 1-hexadecanoyl-sn-glycero-3-phosphate + (9Z)-octadecenoyl-CoA = 1-hexadecanoyl-2-(9Z-octadecenoyl)-sn-glycero-3-phosphate + CoA. It catalyses the reaction 1-(9Z-octadecenoyl)-sn-glycero-3-phosphate + (9Z)-octadecenoyl-CoA = 1,2-di-(9Z-octadecenoyl)-sn-glycero-3-phosphate + CoA. The enzyme catalyses 1-(6Z,9Z,12Z-octadecatrienoyl)-sn-glycero-3-phosphate + (9Z)-octadecenoyl-CoA = (6Z,9Z,12Z)-octadecatrienoyl-2-(9Z)-octadecenoyl-sn-glycero-3-phosphate + CoA. It carries out the reaction 1-(9Z,12Z,15Z)-octadecatrienoyl-sn-glycero-3-phosphate + (9Z)-octadecenoyl-CoA = 1-(9Z,12Z,15Z)-octadecatrienoyl-2-(9Z)-octadecenoyl-sn-glycero-3-phosphate + CoA. The catalysed reaction is 1-(9Z-octadecenoyl)-sn-glycero-3-phosphate + tetradecanoyl-CoA = 1-(9Z)-octadecenoyl-2-tetradecanoyl-sn-glycero-3-phosphate + CoA. It catalyses the reaction 1-(9Z-octadecenoyl)-sn-glycero-3-phosphate + hexadecanoyl-CoA = 1-(9Z)-octadecenoyl-2-hexadecanoyl-sn-glycero-3-phosphate + CoA. The enzyme catalyses 1-(9Z-octadecenoyl)-sn-glycero-3-phosphate + octadecanoyl-CoA = 1-(9Z-octadecenoyl)-2-octadecanoyl-sn-glycero-3-phosphate + CoA. It carries out the reaction 1-(9Z-octadecenoyl)-sn-glycero-3-phosphate + (9Z,12Z)-octadecadienoyl-CoA = 1-(9Z)-octadecenoyl-2-(9Z,12Z)-octadecadienoyl-sn-glycero-3-phosphate + CoA. The catalysed reaction is 1-(5Z,8Z,11Z,14Z-eicosatetraenoyl)-sn-glycero-3-phosphate + (9Z)-octadecenoyl-CoA = 1-(5Z,8Z,11Z,14Z)-eicosatetraenoyl-2-(9Z)-octadecenoyl-sn-glycero-3-phosphate + CoA. The protein operates within glycerolipid metabolism; triacylglycerol biosynthesis. It functions in the pathway phospholipid metabolism; CDP-diacylglycerol biosynthesis; CDP-diacylglycerol from sn-glycerol 3-phosphate: step 1/3. In terms of biological role, converts glycerol-3-phosphate to 1-acyl-sn-glycerol-3-phosphate (lysophosphatidic acid or LPA) by incorporating an acyl moiety at the sn-1 position of the glycerol backbone. Also converts LPA into 1,2-diacyl-sn-glycerol-3-phosphate (phosphatidic acid or PA) by incorporating an acyl moiety at the sn-2 position of the glycerol backbone. Protects cells against lipotoxicity. The protein is Glycerol-3-phosphate acyltransferase 3 of Rattus norvegicus (Rat).